We begin with the raw amino-acid sequence, 49 residues long: Large ribosomal subunit protein bL33 (49 aa).

It belongs to the bacterial ribosomal protein bL33 family.

This is Large ribosomal subunit protein bL33 from Desulforamulus reducens (strain ATCC BAA-1160 / DSM 100696 / MI-1) (Desulfotomaculum reducens).